The primary structure comprises 236 residues: 7-cyano-7-deazaguanine synthase (236 aa).

7 to 17 (CSGGLDSVSLA) serves as a coordination point for ATP. Zn(2+) contacts are provided by Cys-185, Cys-193, Cys-196, and Cys-199.

This sequence belongs to the QueC family. Requires Zn(2+) as cofactor.

It catalyses the reaction 7-carboxy-7-deazaguanine + NH4(+) + ATP = 7-cyano-7-deazaguanine + ADP + phosphate + H2O + H(+). Its pathway is purine metabolism; 7-cyano-7-deazaguanine biosynthesis. Functionally, catalyzes the ATP-dependent conversion of 7-carboxy-7-deazaguanine (CDG) to 7-cyano-7-deazaguanine (preQ(0)). The chain is 7-cyano-7-deazaguanine synthase from Rhizobium etli (strain CIAT 652).